The following is a 538-amino-acid chain: Putative cysteine ligase BshC (538 aa).

Positions 460 to 483 (KINEQIELLEKMLKRNVEKKHEVQ) form a coiled coil.

Belongs to the BshC family.

In terms of biological role, involved in bacillithiol (BSH) biosynthesis. May catalyze the last step of the pathway, the addition of cysteine to glucosamine malate (GlcN-Mal) to generate BSH. The sequence is that of Putative cysteine ligase BshC from Bacillus mycoides (strain KBAB4) (Bacillus weihenstephanensis).